Consider the following 158-residue polypeptide: NAD(P)H-quinone oxidoreductase subunit J, chloroplastic (158 aa).

Belongs to the complex I 30 kDa subunit family. NDH is composed of at least 16 different subunits, 5 of which are encoded in the nucleus.

The protein localises to the plastid. It localises to the chloroplast thylakoid membrane. It catalyses the reaction a plastoquinone + NADH + (n+1) H(+)(in) = a plastoquinol + NAD(+) + n H(+)(out). It carries out the reaction a plastoquinone + NADPH + (n+1) H(+)(in) = a plastoquinol + NADP(+) + n H(+)(out). NDH shuttles electrons from NAD(P)H:plastoquinone, via FMN and iron-sulfur (Fe-S) centers, to quinones in the photosynthetic chain and possibly in a chloroplast respiratory chain. The immediate electron acceptor for the enzyme in this species is believed to be plastoquinone. Couples the redox reaction to proton translocation, and thus conserves the redox energy in a proton gradient. The chain is NAD(P)H-quinone oxidoreductase subunit J, chloroplastic from Helianthus annuus (Common sunflower).